The primary structure comprises 1154 residues: Chromosome partition protein Smc (1154 aa).

Residue 32–39 (PNGCGKSN) participates in ATP binding. 3 coiled-coil regions span residues 170–215 (VAGL…ARQA), 282–505 (LREA…LNGE), and 627–993 (AARR…EARE).

Belongs to the SMC family. Homodimer.

It localises to the cytoplasm. Functionally, required for chromosome condensation and partitioning. This chain is Chromosome partition protein Smc, found in Rhodopseudomonas palustris (strain ATCC BAA-98 / CGA009).